The chain runs to 534 residues: Calcium-dependent protein kinase 18 (534 aa).

Positions 1 to 49 (MGLCFSSPKATRRGTGSRNPNPDSPTQGKASEKVSNKNKKNTKKIQLRH) are disordered. A lipid anchor (N-myristoyl glycine) is attached at G2. Residues 14-29 (GTGSRNPNPDSPTQGK) show a composition bias toward polar residues. A compositionally biased stretch (basic residues) spans 36–47 (NKNKKNTKKIQL). Residues 71-331 (YTIGKLLGHG…AAQALSHSWV (261 aa)) enclose the Protein kinase domain. ATP-binding positions include 77 to 85 (LGHGQFGFT) and K100. The Proton acceptor role is filled by D197. S237 is modified (phosphoserine). Positions 337-367 (ASEVPIDISVLNNMRQFVKFSRLKQIALRAL) are autoinhibitory domain. 4 consecutive EF-hand domains span residues 374-409 (DELDDLRDQFDAIDIDKNGSISLEEMRQALAKDVPW), 411-446 (LKDARVAEILQANDSNTDGLVDFTEFVVAALHVNQL), 453-488 (KWQQRSRAAFDKFDIDGDGFITPEELRLQTGLKGSI), and 491-518 (LLEEADVDEDGRISINEFRRLLRSASLK). Ca(2+) is bound by residues D387, D389, N391, S393, E398, D424, N426, D428, E435, D466, D468, D470, E477, D496, D498, D500, and R502. S504 is subject to Phosphoserine. E507 lines the Ca(2+) pocket.

It belongs to the protein kinase superfamily. Ser/Thr protein kinase family. CDPK subfamily.

The protein resides in the membrane. The catalysed reaction is L-seryl-[protein] + ATP = O-phospho-L-seryl-[protein] + ADP + H(+). It carries out the reaction L-threonyl-[protein] + ATP = O-phospho-L-threonyl-[protein] + ADP + H(+). With respect to regulation, activated by calcium. Autophosphorylation may play an important role in the regulation of the kinase activity. In terms of biological role, may play a role in signal transduction pathways that involve calcium as a second messenger. In Arabidopsis thaliana (Mouse-ear cress), this protein is Calcium-dependent protein kinase 18 (CPK18).